A 142-amino-acid chain; its full sequence is Lutropin subunit beta (142 aa).

Residues 1–21 (MEMLQGLLLLWLLLNVGGVWT) form the signal peptide. Disulfide bonds link Cys-30–Cys-78, Cys-44–Cys-93, Cys-47–Cys-131, Cys-55–Cys-109, Cys-59–Cys-111, and Cys-114–Cys-121. N-linked (GlcNAc...) asparagine glycosylation occurs at Asn-34.

Belongs to the glycoprotein hormones subunit beta family. In terms of assembly, heterodimer of a common alpha chain and a unique beta chain which confers biological specificity to thyrotropin, lutropin, follitropin and gonadotropin.

The protein resides in the secreted. Its function is as follows. Promotes spermatogenesis and ovulation by stimulating the testes and ovaries to synthesize steroids. In Panthera tigris altaica (Siberian tiger), this protein is Lutropin subunit beta (LHB).